The sequence spans 615 residues: Elongation factor 4 (615 aa).

Residues 17–198 (ASIRNFCIIA…RVSRTIPAPV (182 aa)) form the tr-type G domain. GTP is bound by residues 29–34 (DHGKST) and 145–148 (NKID).

The protein belongs to the TRAFAC class translation factor GTPase superfamily. Classic translation factor GTPase family. LepA subfamily.

It is found in the cell membrane. It catalyses the reaction GTP + H2O = GDP + phosphate + H(+). Its function is as follows. Required for accurate and efficient protein synthesis under certain stress conditions. May act as a fidelity factor of the translation reaction, by catalyzing a one-codon backward translocation of tRNAs on improperly translocated ribosomes. Back-translocation proceeds from a post-translocation (POST) complex to a pre-translocation (PRE) complex, thus giving elongation factor G a second chance to translocate the tRNAs correctly. Binds to ribosomes in a GTP-dependent manner. The chain is Elongation factor 4 from Clavibacter michiganensis subsp. michiganensis (strain NCPPB 382).